Here is a 1403-residue protein sequence, read N- to C-terminus: MNQEVMNLFNQQAQPVSFDQIKISISSPEKILSWSYGEIKKPETINYRTFKPERDGLFCARIFGPIKDYECLCGKYKRMKYKGVICEKCGVEVTLARVRRDRMGHIELAAPVAHIWFLKSLPSRIGLLLDMALKDLERILYFESYCVIEPGLTPLKERQLLSEEEYLRAQEEYGEDSFTAMIGAEAIRRILQELDLDKIANDLREEIAVTTSELKPKKLLKRLKIIEAFQMSGNKPEWMILTVVPVIPPDLRPLVPLDGGRFATSDLNDLYRRVINRNNRLKRLIELRAPDIIIRNEKRMLQEAVDALFDNGRRGRVITGANKRPLKSLADMLKGKQGRFRQNLLGKRVDYSGRSVIVVGPELKLHQCGLPKKMALELFKPFIYARLDAKGFSATVKQAKKLVEKEKPEVWDILDEVIREHPVMLNRAPTLHRLGIQAFEPKLIEGKAIQLHPLVCAAFNADFDGDQMAVHVPLSLEAQLEARVLMMSTNNILHPANGQPIIVPSQDIVLGLYYLSIVAEGAPGEYKPDNAKNPMQGVYGDMGELEHALAAKAVSLHSKIKWRWTGIGPDGEPLTKTYETTPGRVILSGALPKHAKVPFDVVNKLMTKKEISAMIDTVYRHCGQKESVIFCDRIMALGFNHAFKAGISFGKDDMVVPENKWSIVDTTRALVKDYEQQYNDGLITQGEKYNKVVDAWAKCSDKLAAEMMGRISSVQKDEKGADKQVNSIYMMSHSGARGSPAQMKQLAAMRGLMAKPSGEIIETPIISNFKEGLDVLEYFNSTHGARKGLADTALKTANSGYLTRRLVDVAQDAVIREVDCGTTSGIKMRAIVDAGQVVATLATRILGRATAEDLVAADGTVIVKTGETIEERHLPAINAAGIQEVKIRSVLVCATKSGVCATCYGRDLARGTPVNMGEAVGVIAAQSIGEPGTQLTMRTFHIGGAAQIADSSFIESSFEGTIKIRNRAVAKNTDGDLIATGRNVAVVIVGSDGVERAVHRLQYGAKLRVDEGDKIKRGQRIAEWDPYTRPILTEVDGIVAYEDLVDGQSMTETTDESTGIAKRVVVDWRGSARTSDLKPAMVVVDRDGKALKLPRGSDARYFLPVDAIIGFDPGATVKAGDILARVSTDSAKTRDITGGLPRVAELFEARRPKDAAIIAEKSGTIAFGRDYKNKRRLTLTPHDGSEAVEYLIPKGKHIHLQDGDVVELGDYIVDGNPAPHDILAIKGVEELAAYLVNEIQEVYRLQGVSINDKHIEVIVRQMLQKVEVTDGGDSDILSGDQIDRTELTDYNEKLLAEGKKPIQGVPVLLGITKASLQTKSFISAASFQETTRVLTEAAVNGKVDTLEGLKENVIVGSLIPAGTGSMVADIRSIARRRDAMILQQKQAESGAMPVEELPPAAAE.

Positions 71, 73, 86, and 89 each coordinate Zn(2+). The Mg(2+) site is built by Asp462, Asp464, and Asp466. Zn(2+) is bound by residues Cys820, Cys893, Cys900, and Cys903.

It belongs to the RNA polymerase beta' chain family. In terms of assembly, the RNAP catalytic core consists of 2 alpha, 1 beta, 1 beta' and 1 omega subunit. When a sigma factor is associated with the core the holoenzyme is formed, which can initiate transcription. Mg(2+) is required as a cofactor. It depends on Zn(2+) as a cofactor.

It carries out the reaction RNA(n) + a ribonucleoside 5'-triphosphate = RNA(n+1) + diphosphate. In terms of biological role, DNA-dependent RNA polymerase catalyzes the transcription of DNA into RNA using the four ribonucleoside triphosphates as substrates. The polypeptide is DNA-directed RNA polymerase subunit beta' (Methylobacterium radiotolerans (strain ATCC 27329 / DSM 1819 / JCM 2831 / NBRC 15690 / NCIMB 10815 / 0-1)).